Consider the following 116-residue polypeptide: Large ribosomal subunit protein uL18 (116 aa).

It belongs to the universal ribosomal protein uL18 family. As to quaternary structure, part of the 50S ribosomal subunit; part of the 5S rRNA/L5/L18/L25 subcomplex. Contacts the 5S and 23S rRNAs.

In terms of biological role, this is one of the proteins that bind and probably mediate the attachment of the 5S RNA into the large ribosomal subunit, where it forms part of the central protuberance. The chain is Large ribosomal subunit protein uL18 from Shewanella putrefaciens (strain CN-32 / ATCC BAA-453).